A 403-amino-acid polypeptide reads, in one-letter code: Flavohemoprotein (403 aa).

The Globin domain occupies 1–138 (MLTQKTKDIV…LADILAGMES (138 aa)). A heme b-binding site is contributed by His85. Active-site charge relay system residues include Tyr95 and Glu137. The reductase stretch occupies residues 149–403 (GGWAGWRRFI…EVFGPDLFAE (255 aa)). An FAD-binding FR-type domain is found at 152-262 (AGWRRFIVRE…AAPYGNFYID (111 aa)). FAD is bound by residues Tyr190 and 206 to 209 (RQYS). 275–280 (GVGLTP) is an NADP(+) binding site. Residue 395–398 (VFGP) participates in FAD binding.

It belongs to the globin family. Two-domain flavohemoproteins subfamily. In the C-terminal section; belongs to the flavoprotein pyridine nucleotide cytochrome reductase family. The cofactor is heme b. FAD serves as cofactor.

The enzyme catalyses 2 nitric oxide + NADPH + 2 O2 = 2 nitrate + NADP(+) + H(+). The catalysed reaction is 2 nitric oxide + NADH + 2 O2 = 2 nitrate + NAD(+) + H(+). In terms of biological role, is involved in NO detoxification in an aerobic process, termed nitric oxide dioxygenase (NOD) reaction that utilizes O(2) and NAD(P)H to convert NO to nitrate, which protects the bacterium from various noxious nitrogen compounds. Therefore, plays a central role in the inducible response to nitrosative stress. In Rhizobium meliloti (strain 1021) (Ensifer meliloti), this protein is Flavohemoprotein.